A 364-amino-acid chain; its full sequence is MAQTLLNDTFLRALLREPTDYTPIWLMRQAGRYLPEYNATRARAGSFLGLAKQPDYATEVTLQPLERFPLDAAILFSDILTIPDAMGLGLDFAAGEGPKFAHPVRTEADVAKLAVPDIGATLGYVTDAVREIRRALTDGEGRQRVPLIGFSGSPWTLACYMVEGGGSDDFRTVKSMAYARPDLMHRILDINAQAVAAYLNAQIEAGAQAVMIFDTWGGALADGAYQRFSLDYVRRVLAQLKREHDGARVPAIAFTKGGGLWLEELAATGVDAVGLDWTVNLGRARERVAGRVALQGNLDPTILFAPPEAIRAEARAVLDSYGNHPGHVFNLGHGISQFTPPEHVAELVDEVHRHSRAIRSGAGS.

Substrate is bound by residues 28–32, Asp78, Tyr160, Thr215, and His333; that span reads RQAGR.

It belongs to the uroporphyrinogen decarboxylase family. Homodimer.

The protein localises to the cytoplasm. The catalysed reaction is uroporphyrinogen III + 4 H(+) = coproporphyrinogen III + 4 CO2. The protein operates within porphyrin-containing compound metabolism; protoporphyrin-IX biosynthesis; coproporphyrinogen-III from 5-aminolevulinate: step 4/4. In terms of biological role, catalyzes the decarboxylation of four acetate groups of uroporphyrinogen-III to yield coproporphyrinogen-III. The sequence is that of Uroporphyrinogen decarboxylase from Burkholderia pseudomallei (strain 1106a).